The primary structure comprises 204 residues: MATNPTPRIGKAQRATKESDIQVEWNLDGTGKTDIDTGVPFFDHMLTALGAHGSFDLKVHARGDVEIDAHHTVEDTAIVMGQALAQALGDKAGIRRFGDAFIPMDETLAHAAVDVSGRPYYVGVGEPEQMLSSVIGGHYATVINQHFFETLALNSRIALHVRCLYGRDPHHITEAEFKAVARALRAAVEDDPRVGGVPSTKGTL.

It belongs to the imidazoleglycerol-phosphate dehydratase family.

The protein resides in the cytoplasm. The enzyme catalyses D-erythro-1-(imidazol-4-yl)glycerol 3-phosphate = 3-(imidazol-4-yl)-2-oxopropyl phosphate + H2O. The protein operates within amino-acid biosynthesis; L-histidine biosynthesis; L-histidine from 5-phospho-alpha-D-ribose 1-diphosphate: step 6/9. The protein is Imidazoleglycerol-phosphate dehydratase of Corynebacterium jeikeium (strain K411).